We begin with the raw amino-acid sequence, 125 residues long: Small ribosomal subunit protein uS13 (125 aa).

Residues 94-125 (SLPVRGQRTRTNARTRKGKRKTVAGKKKAVKK) form a disordered region.

This sequence belongs to the universal ribosomal protein uS13 family. Part of the 30S ribosomal subunit. Forms a loose heterodimer with protein S19. Forms two bridges to the 50S subunit in the 70S ribosome.

Its function is as follows. Located at the top of the head of the 30S subunit, it contacts several helices of the 16S rRNA. In the 70S ribosome it contacts the 23S rRNA (bridge B1a) and protein L5 of the 50S subunit (bridge B1b), connecting the 2 subunits; these bridges are implicated in subunit movement. Contacts the tRNAs in the A and P-sites. In Chlorobium chlorochromatii (strain CaD3), this protein is Small ribosomal subunit protein uS13.